Here is a 484-residue protein sequence, read N- to C-terminus: Cysteine--tRNA ligase (484 aa).

Residue cysteine 27 coordinates Zn(2+). Residues 29-39 (PTTYNYIHLGN) carry the 'HIGH' region motif. Cysteine 207, histidine 232, and glutamate 236 together coordinate Zn(2+). The short motif at 264–268 (KMSKS) is the 'KMSKS' region element. Lysine 267 contributes to the ATP binding site.

Belongs to the class-I aminoacyl-tRNA synthetase family. As to quaternary structure, monomer. Requires Zn(2+) as cofactor.

The protein resides in the cytoplasm. The enzyme catalyses tRNA(Cys) + L-cysteine + ATP = L-cysteinyl-tRNA(Cys) + AMP + diphosphate. In Pelotomaculum thermopropionicum (strain DSM 13744 / JCM 10971 / SI), this protein is Cysteine--tRNA ligase.